The following is a 259-amino-acid chain: Hemin import ATP-binding protein HmuV (259 aa).

Residues 6–242 (IQGRDLCVTY…ERIEQVYGYQ (237 aa)) enclose the ABC transporter domain. An ATP-binding site is contributed by 38 to 45 (GPNGAGKS).

The protein belongs to the ABC transporter superfamily. Heme (hemin) importer (TC 3.A.1.14.5) family. In terms of assembly, the complex is composed of two ATP-binding proteins (HmuV), two transmembrane proteins (HmuU) and a solute-binding protein (HmuT).

Its subcellular location is the cell inner membrane. Its function is as follows. Part of the ABC transporter complex HmuTUV involved in hemin import. Responsible for energy coupling to the transport system. The chain is Hemin import ATP-binding protein HmuV from Vibrio cholerae serotype O1 (strain ATCC 39315 / El Tor Inaba N16961).